Here is a 173-residue protein sequence, read N- to C-terminus: Cytochrome b6-f complex subunit 4, chloroplastic (173 aa).

Residues Glu1–Asn14 constitute a chloroplast transit peptide. Transmembrane regions (helical) follow at residues Leu49–Val69, Leu108–Glu128, and Ser144–Ile164.

The protein belongs to the cytochrome b family. PetD subfamily. The 4 large subunits of the cytochrome b6-f complex are cytochrome b6, subunit IV (17 kDa polypeptide, petD), cytochrome f and the Rieske protein, while the 4 small subunits are petG, petL, petM and petN. The complex functions as a dimer.

The protein resides in the plastid. Its subcellular location is the chloroplast thylakoid membrane. Its function is as follows. Component of the cytochrome b6-f complex, which mediates electron transfer between photosystem II (PSII) and photosystem I (PSI), cyclic electron flow around PSI, and state transitions. The protein is Cytochrome b6-f complex subunit 4, chloroplastic of Euglena gracilis.